The following is a 133-amino-acid chain: Putative pre-16S rRNA nuclease (133 aa).

Belongs to the YqgF nuclease family.

It localises to the cytoplasm. Could be a nuclease involved in processing of the 5'-end of pre-16S rRNA. In Bordetella pertussis (strain Tohama I / ATCC BAA-589 / NCTC 13251), this protein is Putative pre-16S rRNA nuclease.